The primary structure comprises 154 residues: N-acetylneuraminate anomerase NanQ (154 aa).

It belongs to the NanQ anomerase family. It depends on Zn(2+) as a cofactor.

The protein localises to the cytoplasm. It catalyses the reaction N-acetyl-alpha-neuraminate = aceneuramate. The catalysed reaction is N-acetyl-beta-neuraminate = aceneuramate. With respect to regulation, inhibited by 1,10-phenanthroline. Its function is as follows. Opens both the alpha- and beta-forms of N-acetylneuraminate (sialic acid; Neu5Ac) to provide aceneuramate, the preferred substrate for NanA. Has preferential activity on the beta-anomer rather than the alpha-anomer. Accelerates a reaction that is spontaneous at slightly alkaline pH, facilitates the reaction at acidic pH. The sequence is that of N-acetylneuraminate anomerase NanQ from Escherichia coli (strain K12).